The chain runs to 183 residues: Dual-action ribosomal maturation protein DarP (183 aa).

It belongs to the DarP family.

The protein resides in the cytoplasm. Member of a network of 50S ribosomal subunit biogenesis factors which assembles along the 30S-50S interface, preventing incorrect 23S rRNA structures from forming. Promotes peptidyl transferase center (PTC) maturation. This chain is Dual-action ribosomal maturation protein DarP, found in Klebsiella pneumoniae (strain 342).